Consider the following 64-residue polypeptide: MAIVPKRKTSKQRKRLRRSHHALDIQNLVKCSNCSQKIQQHRTCMFCGFYKNKKVEGFQARNDR.

It belongs to the bacterial ribosomal protein bL32 family.

In Mycoplasma mobile (strain ATCC 43663 / 163K / NCTC 11711) (Mesomycoplasma mobile), this protein is Large ribosomal subunit protein bL32.